The chain runs to 401 residues: Bifunctional enzyme IspD/IspF (401 aa).

Residues 1 to 234 (MQKPPRTAAI…SRLTAALGDI (234 aa)) are 2-C-methyl-D-erythritol 4-phosphate cytidylyltransferase. A 2-C-methyl-D-erythritol 2,4-cyclodiphosphate synthase region spans residues 235 to 401 (RTGTGYDVHA…SPWGAEGQAS (167 aa)). Residues Asp-241 and His-243 each coordinate a divalent metal cation. 4-CDP-2-C-methyl-D-erythritol 2-phosphate-binding positions include 241 to 243 (DVH) and 267 to 268 (HS). A divalent metal cation is bound at residue His-275. Residues 289 to 291 (DIG), 365 to 368 (TTSE), Phe-372, and Arg-375 contribute to the 4-CDP-2-C-methyl-D-erythritol 2-phosphate site.

In the N-terminal section; belongs to the IspD/TarI cytidylyltransferase family. IspD subfamily. The protein in the C-terminal section; belongs to the IspF family. Requires a divalent metal cation as cofactor.

The enzyme catalyses 2-C-methyl-D-erythritol 4-phosphate + CTP + H(+) = 4-CDP-2-C-methyl-D-erythritol + diphosphate. It catalyses the reaction 4-CDP-2-C-methyl-D-erythritol 2-phosphate = 2-C-methyl-D-erythritol 2,4-cyclic diphosphate + CMP. It participates in isoprenoid biosynthesis; isopentenyl diphosphate biosynthesis via DXP pathway; isopentenyl diphosphate from 1-deoxy-D-xylulose 5-phosphate: step 2/6. Its pathway is isoprenoid biosynthesis; isopentenyl diphosphate biosynthesis via DXP pathway; isopentenyl diphosphate from 1-deoxy-D-xylulose 5-phosphate: step 4/6. Functionally, bifunctional enzyme that catalyzes the formation of 4-diphosphocytidyl-2-C-methyl-D-erythritol from CTP and 2-C-methyl-D-erythritol 4-phosphate (MEP) (IspD), and catalyzes the conversion of 4-diphosphocytidyl-2-C-methyl-D-erythritol 2-phosphate (CDP-ME2P) to 2-C-methyl-D-erythritol 2,4-cyclodiphosphate (ME-CPP) with a corresponding release of cytidine 5-monophosphate (CMP) (IspF). The protein is Bifunctional enzyme IspD/IspF of Rhodopseudomonas palustris (strain HaA2).